Consider the following 221-residue polypeptide: Ribosomal RNA small subunit methyltransferase G (221 aa).

Residues G83, F88, 132-133, and R146 contribute to the S-adenosyl-L-methionine site; that span reads LE.

It belongs to the methyltransferase superfamily. RNA methyltransferase RsmG family.

The protein localises to the cytoplasm. The enzyme catalyses guanosine(527) in 16S rRNA + S-adenosyl-L-methionine = N(7)-methylguanosine(527) in 16S rRNA + S-adenosyl-L-homocysteine. Specifically methylates the N7 position of guanine in position 527 of 16S rRNA. In Zymomonas mobilis subsp. mobilis (strain ATCC 31821 / ZM4 / CP4), this protein is Ribosomal RNA small subunit methyltransferase G.